The sequence spans 397 residues: Acetate kinase 1 (397 aa).

Asparagine 8 is a Mg(2+) binding site. An ATP-binding site is contributed by lysine 15. A substrate-binding site is contributed by arginine 89. Catalysis depends on aspartate 146, which acts as the Proton donor/acceptor. ATP-binding positions include 206-210 (HLGNG), 281-283 (DLR), and 329-333 (GIGEN). Glutamate 382 contributes to the Mg(2+) binding site.

This sequence belongs to the acetokinase family. As to quaternary structure, homodimer. It depends on Mg(2+) as a cofactor. The cofactor is Mn(2+).

It is found in the cytoplasm. It carries out the reaction acetate + ATP = acetyl phosphate + ADP. It functions in the pathway metabolic intermediate biosynthesis; acetyl-CoA biosynthesis; acetyl-CoA from acetate: step 1/2. Catalyzes the formation of acetyl phosphate from acetate and ATP. Can also catalyze the reverse reaction. In Listeria monocytogenes serovar 1/2a (strain ATCC BAA-679 / EGD-e), this protein is Acetate kinase 1.